Consider the following 141-residue polypeptide: Methylglyoxal synthase (141 aa).

Residues 1 to 141 (MNIALIAHDK…PKLQKNKSDK (141 aa)) form the MGS-like domain. Residues histidine 8, lysine 12, and 34–37 (TGTT) contribute to the substrate site. The Proton donor/acceptor role is filled by aspartate 60. Position 87 (histidine 87) interacts with substrate.

The protein belongs to the methylglyoxal synthase family.

It carries out the reaction dihydroxyacetone phosphate = methylglyoxal + phosphate. Its function is as follows. Catalyzes the formation of methylglyoxal from dihydroxyacetone phosphate. The protein is Methylglyoxal synthase of Caldicellulosiruptor bescii (strain ATCC BAA-1888 / DSM 6725 / KCTC 15123 / Z-1320) (Anaerocellum thermophilum).